We begin with the raw amino-acid sequence, 389 residues long: Large ribosomal subunit protein uL3 (389 aa).

This sequence belongs to the universal ribosomal protein uL3 family.

It is found in the cytoplasm. The polypeptide is Large ribosomal subunit protein uL3 (RPL3) (Debaryomyces hansenii (strain ATCC 36239 / CBS 767 / BCRC 21394 / JCM 1990 / NBRC 0083 / IGC 2968) (Yeast)).